Reading from the N-terminus, the 501-residue chain is Lysine--tRNA ligase (501 aa).

Mg(2+) is bound by residues Glu411 and Glu418.

Belongs to the class-II aminoacyl-tRNA synthetase family. In terms of assembly, homodimer. Mg(2+) is required as a cofactor.

It localises to the cytoplasm. The catalysed reaction is tRNA(Lys) + L-lysine + ATP = L-lysyl-tRNA(Lys) + AMP + diphosphate. The chain is Lysine--tRNA ligase from Pseudomonas aeruginosa (strain UCBPP-PA14).